The primary structure comprises 419 residues: Serine hydroxymethyltransferase (419 aa).

Residues leucine 121 and glycine 125 to leucine 127 contribute to the (6S)-5,6,7,8-tetrahydrofolate site. Residue lysine 230 is modified to N6-(pyridoxal phosphate)lysine. Residues glutamate 246 and serine 355–phenylalanine 357 each bind (6S)-5,6,7,8-tetrahydrofolate.

This sequence belongs to the SHMT family. Homodimer. Requires pyridoxal 5'-phosphate as cofactor.

Its subcellular location is the cytoplasm. It catalyses the reaction (6R)-5,10-methylene-5,6,7,8-tetrahydrofolate + glycine + H2O = (6S)-5,6,7,8-tetrahydrofolate + L-serine. It functions in the pathway one-carbon metabolism; tetrahydrofolate interconversion. Its pathway is amino-acid biosynthesis; glycine biosynthesis; glycine from L-serine: step 1/1. Catalyzes the reversible interconversion of serine and glycine with tetrahydrofolate (THF) serving as the one-carbon carrier. This reaction serves as the major source of one-carbon groups required for the biosynthesis of purines, thymidylate, methionine, and other important biomolecules. Also exhibits THF-independent aldolase activity toward beta-hydroxyamino acids, producing glycine and aldehydes, via a retro-aldol mechanism. The polypeptide is Serine hydroxymethyltransferase (Streptococcus suis (strain 98HAH33)).